Here is a 325-residue protein sequence, read N- to C-terminus: Heat-inducible transcription repressor HrcA (325 aa).

The protein belongs to the HrcA family.

Its function is as follows. Negative regulator of class I heat shock genes (grpE-dnaK-dnaJ and groELS operons). Prevents heat-shock induction of these operons. This chain is Heat-inducible transcription repressor HrcA, found in Staphylococcus aureus (strain JH1).